Here is a 586-residue protein sequence, read N- to C-terminus: Arginine--tRNA ligase (586 aa).

Positions 133–143 match the 'HIGH' region motif; it reads ANPTGPLNIVS.

This sequence belongs to the class-I aminoacyl-tRNA synthetase family. Monomer.

The protein localises to the cytoplasm. The catalysed reaction is tRNA(Arg) + L-arginine + ATP = L-arginyl-tRNA(Arg) + AMP + diphosphate. The chain is Arginine--tRNA ligase from Leptospira interrogans serogroup Icterohaemorrhagiae serovar Lai (strain 56601).